The sequence spans 212 residues: Peptide methionine sulfoxide reductase MsrA (212 aa).

A compositionally biased stretch (polar residues) spans 1 to 14 (MNSIDKTQRITQSD). A disordered region spans residues 1–21 (MNSIDKTQRITQSDALPGRST). The active site involves C52.

It belongs to the MsrA Met sulfoxide reductase family.

The enzyme catalyses L-methionyl-[protein] + [thioredoxin]-disulfide + H2O = L-methionyl-(S)-S-oxide-[protein] + [thioredoxin]-dithiol. The catalysed reaction is [thioredoxin]-disulfide + L-methionine + H2O = L-methionine (S)-S-oxide + [thioredoxin]-dithiol. Functionally, has an important function as a repair enzyme for proteins that have been inactivated by oxidation. Catalyzes the reversible oxidation-reduction of methionine sulfoxide in proteins to methionine. This chain is Peptide methionine sulfoxide reductase MsrA, found in Pectobacterium atrosepticum (strain SCRI 1043 / ATCC BAA-672) (Erwinia carotovora subsp. atroseptica).